The following is a 168-amino-acid chain: Leukotoxin-activating lysine-acyltransferase LtxC (168 aa).

Active-site residues include His-23 and Asp-92.

The protein belongs to the RTX toxin acyltransferase family.

It localises to the cytoplasm. It catalyses the reaction a fatty acyl-[ACP] + L-lysyl-[protein] = N(6)-(fatty acyl)-L-lysyl-[protein] + holo-[ACP] + H(+). Its function is as follows. Required for full activity and modification of the LtxA leukotoxin. Involved in fatty acid modification of the protoxin at two internal lysine residues, thereby converting it to the active toxin. The polypeptide is Leukotoxin-activating lysine-acyltransferase LtxC (Aggregatibacter actinomycetemcomitans (Actinobacillus actinomycetemcomitans)).